Consider the following 150-residue polypeptide: MNTCIQLLILCLVTVINSENSTDNSTENTIENEIENATETELSEAIENETENVTETELPETVETEIQTEAQNQPQIPKQKYCKSEGQYCSRTYFHRCCGNLVCQLHGFFNGTCVQCLAERKFCIWSSECCSRRCRLFRCRKNPYVQVIPY.

The first 18 residues, 1–18 (MNTCIQLLILCLVTVINS), serve as a signal peptide directing secretion. N-linked (GlcNAc...) asparagine glycans are attached at residues Asn-20, Asn-24, Asn-36, Asn-48, Asn-52, and Asn-110. Cystine bridges form between Cys-116–Cys-130, Cys-123–Cys-134, and Cys-129–Cys-139.

The protein belongs to the UPF0506 family.

The protein localises to the secreted. This is UPF0506 protein SJCHGC02380 from Schistosoma japonicum (Blood fluke).